Reading from the N-terminus, the 625-residue chain is Thrombopoietin receptor (625 aa).

Positions 1-25 are cleaved as a signal peptide; the sequence is MPSWALFMVTSCLLLALPNQAQVTS. At 26 to 482 the chain is on the extracellular side; that stretch reads QDVFLLALGT…RVSTGSETAW (457 aa). The N-linked (GlcNAc...) asparagine glycan is linked to N117. Fibronectin type-III domains lie at 178 to 270 and 383 to 479; these read NATA…PVTV and PTPS…TGSE. The WSXWS motif signature appears at 465-469; that stretch reads WSAWS. A helical transmembrane segment spans residues 483-504; it reads ITLVTALLLVLSLSALLGLLLL. The Cytoplasmic segment spans residues 505-625; sequence KWQFPAHYRR…YLPLSYWQQP (121 aa). Residues 519 to 527 carry the Box 1 motif motif; it reads LWPSLPDLH. Residues K544 and K564 each participate in a glycyl lysine isopeptide (Lys-Gly) (interchain with G-Cter in ubiquitin) cross-link. Residues Y616 and Y621 each carry the phosphotyrosine modification.

This sequence belongs to the type I cytokine receptor family. Type 1 subfamily. As to quaternary structure, homodimer. Interacts with ATXN2L. Interacts with JAK2 and TYK2; these interactions increase MPL localization to the cell membrane. Interacts with THPO. Interacts with SHIP/INPP5D. Interacts with kinases BTK and SYK. Post-translationally, ubiquitination at Lys-544 and Lys-564 targets MPL for degradation by both the lysosomal and proteasomal pathways. The E3 ubiquitin-protein ligase CBL significantly contributes to this ubiquitination.

The protein resides in the cell membrane. It localises to the golgi apparatus. The protein localises to the cell surface. In terms of biological role, receptor for thrombopoietin that regulates hematopoietic stem cell renewal, megakaryocyte differentiation, and platelet formation. Upon activation by THPO, induces rapid tyrosine phosphorylation and activation of JAK2, providing docking sites for many signaling proteins such as STAT5, SHIP/INPP5D, GRB2, SOS1 and PI3K. In turn, These signaling cascades lead to the proliferation, survival, and differentiation of megakaryocytes, ultimately leading to increased platelet production. Functionally, acts as an inhibitor of thrombopoietin signaling by promoting protein down-regulation of full-length isoform Mpl-fl. The protein is Thrombopoietin receptor (Mpl) of Mus musculus (Mouse).